A 323-amino-acid chain; its full sequence is Arginase-1 (323 aa).

The tract at residues M1 to G27 is disordered. K17 carries the post-translational modification N6-succinyllysine. S62 and S72 each carry phosphoserine. At K75 the chain carries N6-succinyllysine. Mn(2+) is bound by residues H101, D124, H126, and D128. Substrate-binding positions include H126–N130 and S137–N139. Position 163 is a phosphoserine (S163). Substrate is bound at residue D183. S217 bears the Phosphoserine mark. Residues D232 and D234 each contribute to the Mn(2+) site. Substrate-binding residues include T246 and E277. A Phosphothreonine modification is found at T281.

Belongs to the arginase family. In terms of assembly, homotrimer. Interacts with CMTM6. It depends on Mn(2+) as a cofactor. In terms of tissue distribution, detected in liver (at protein level).

The protein localises to the cytoplasm. Its subcellular location is the cytoplasmic granule. The catalysed reaction is L-arginine + H2O = urea + L-ornithine. It participates in nitrogen metabolism; urea cycle; L-ornithine and urea from L-arginine: step 1/1. Inactivated by diethyl pyrocarbonate (DEPC). Functionally, key element of the urea cycle converting L-arginine to urea and L-ornithine, which is further metabolized into metabolites proline and polyamides that drive collagen synthesis and bioenergetic pathways critical for cell proliferation, respectively; the urea cycle takes place primarily in the liver and, to a lesser extent, in the kidneys. Functions in L-arginine homeostasis in nonhepatic tissues characterized by the competition between nitric oxide synthase (NOS) and arginase for the available intracellular substrate arginine. Arginine metabolism is a critical regulator of innate and adaptive immune responses. Involved in an antimicrobial effector pathway in polymorphonuclear granulocytes (PMN). Upon PMN cell death is liberated from the phagolysosome and depletes arginine in the microenvironment leading to suppressed T cell and natural killer (NK) cell proliferation and cytokine secretion. In group 2 innate lymphoid cells (ILC2s) promotes acute type 2 inflammation in the lung and is involved in optimal ILC2 proliferation but not survival. Plays a role in the immune response of alternatively activated or M2 macrophages in processes such as wound healing and tissue regeneration, immune defense against multicellular pathogens and parasites, and immune suppression and allergic inflammation; the regulatory outcome seems to be organ specific. In tumor-infiltrating dendritic cells (DCs) and myeloid-derived suppressor cells (MDSCs) plays a role in suppression of T cell-mediated antitumor immunity. The sequence is that of Arginase-1 (Arg1) from Rattus norvegicus (Rat).